Consider the following 190-residue polypeptide: Probable RNA-binding protein 18 (190 aa).

In terms of domain architecture, RRM spans 25–106; that stretch reads HRLWIGNLDP…KKLVVRWAHA (82 aa). Residues 166–190 form a disordered region; sequence VYSYFKPPDKKRTTPYSRTAWKSRR.

The chain is Probable RNA-binding protein 18 (Rbm18) from Mus musculus (Mouse).